We begin with the raw amino-acid sequence, 215 residues long: High mobility group protein B1 (215 aa).

Positions 9–79 form a DNA-binding region, HMG box 1; the sequence is PRGKMSSYAF…RYEKEMKNYV (71 aa). Residue cysteine 23 is modified to Cysteine sulfonic acid (-SO3H); alternate. Cysteine 23 and cysteine 45 are disulfide-bonded. The NLS 1 stretch occupies residues 27–43; sequence HKKKHPDASVNFSEFSK. The short motif at 27–43 is the Nuclear localization signal (NLS) 1 element; it reads HKKKHPDASVNFSEFSK. A Cysteine sulfonic acid (-SO3H); alternate modification is found at cysteine 45. Positions 75 to 95 are disordered; that stretch reads MKNYVPPKGETKKKFKDPNAP. Residues 83–94 show a composition bias toward basic and acidic residues; it reads GETKKKFKDPNA. The segment at residues 95 to 163 is a DNA-binding region (HMG box 2); sequence PKRPPSAFFL…KYEKDIAAYR (69 aa). The residue at position 106 (cysteine 106) is a Cysteine sulfonic acid (-SO3H). Positions 166 to 179 are enriched in basic and acidic residues; sequence GKVDAGKKVVAKAE. Residues 166–215 form a disordered region; the sequence is GKVDAGKKVVAKAEKSKKKKEEEEDEDEDEEDEEDEEEEEEEEEDDDDDE. The segment at 178-184 is NLS 2; it reads AEKSKKK. Positions 178–184 match the Nuclear localization signal (NLS) 2 motif; that stretch reads AEKSKKK. The span at 187 to 215 shows a compositional bias: acidic residues; sequence EEEDEDEDEEDEEDEEEEEEEEEDDDDDE. Positions 196-210 are involved in intramolecular interaction with K-3; it reads EDEEDEEEEEEEEED. The tract at residues 211–215 is involved in interaction with histone H3; sequence DDDDE.

Belongs to the HMGB family. In terms of processing, reduction/oxidation of cysteine residues Cys-23, Cys-45 and Cys-106 and a possible intramolecular disulfide bond involving Cys-23 and Cys-45 give rise to different redox forms with specific functional activities: 1- fully reduced HMGB1 (HMGB1C23hC45hC106h), 2- disulfide HMGB1 (HMGB1C23-C45C106h) and 3- sulfonyl HMGB1 (HMGB1C23soC45soC106so).

Its subcellular location is the nucleus. The protein resides in the chromosome. The protein localises to the cytoplasm. It is found in the secreted. Multifunctional redox sensitive protein with various roles in different cellular compartments. Nuclear functions are attributed to fully reduced HGMB1. Associates with chromatin and binds DNA with a preference to non-canonical DNA structures such as single-stranded DNA, DNA-containing cruciforms or bent structures, supercoiled DNA and ZDNA. Can bent DNA and enhance DNA flexibility by looping thus providing a mechanism to promote activities on various gene promoters. Can restructure the canonical nucleosome. Proposed to be an universal biosensor for nucleic acids. May promote inflammatory response to sterile and infectious signals and may be involved in the coordination and integration of innate and adaptive immune responses. In the cytoplasm may function as sensor and/or chaperone for immunogenic nucleic acids, and mediate autophagy. May act as danger associated molecular pattern (DAMP) molecule that amplifies immune responses during tissue injury. The polypeptide is High mobility group protein B1 (HMGB1) (Gallus gallus (Chicken)).